The sequence spans 873 residues: Nonsense-mediated mRNA decay factor SMG8 (873 aa).

The disordered stretch occupies residues 531 to 604 (AKKMAQREDE…ESMASKTERE (74 aa)). Residues 540 to 550 (ELAEEDTDLDI) are compositionally biased toward acidic residues. Composition is skewed to low complexity over residues 551-562 (PESLLDPDSTSP) and 574-583 (SSSESSSQES). A compositionally biased stretch (basic and acidic residues) spans 591 to 604 (SRRDESMASKTERE).

The protein belongs to the SMG8 family.

In terms of biological role, involved in nonsense-mediated decay (NMD) of mRNAs containing premature stop codons. Probable component of kinase complex containing smg-1 and recruited to stalled ribosomes. The chain is Nonsense-mediated mRNA decay factor SMG8 (smg-8) from Caenorhabditis elegans.